The following is a 473-amino-acid chain: Siroheme synthase 2 (473 aa).

The tract at residues 1-204 (MDYFPIFCQL…NDHVQADQHV (204 aa)) is precorrin-2 dehydrogenase /sirohydrochlorin ferrochelatase. Residues 22–23 (EI) and 43–44 (CE) each bind NAD(+). Residue Ser128 is modified to Phosphoserine. The tract at residues 216-473 (GEVVLVGAGP…KVTECVAHVG (258 aa)) is uroporphyrinogen-III C-methyltransferase. Residue Pro225 coordinates S-adenosyl-L-methionine. Asp248 acts as the Proton acceptor in catalysis. The active-site Proton donor is Lys270. Residues 301–303 (GGD), Ile306, 331–332 (TA), Met382, and Gly411 each bind S-adenosyl-L-methionine.

The protein in the N-terminal section; belongs to the precorrin-2 dehydrogenase / sirohydrochlorin ferrochelatase family. This sequence in the C-terminal section; belongs to the precorrin methyltransferase family.

The enzyme catalyses uroporphyrinogen III + 2 S-adenosyl-L-methionine = precorrin-2 + 2 S-adenosyl-L-homocysteine + H(+). It carries out the reaction precorrin-2 + NAD(+) = sirohydrochlorin + NADH + 2 H(+). It catalyses the reaction siroheme + 2 H(+) = sirohydrochlorin + Fe(2+). It participates in cofactor biosynthesis; adenosylcobalamin biosynthesis; precorrin-2 from uroporphyrinogen III: step 1/1. Its pathway is cofactor biosynthesis; adenosylcobalamin biosynthesis; sirohydrochlorin from precorrin-2: step 1/1. The protein operates within porphyrin-containing compound metabolism; siroheme biosynthesis; precorrin-2 from uroporphyrinogen III: step 1/1. It functions in the pathway porphyrin-containing compound metabolism; siroheme biosynthesis; siroheme from sirohydrochlorin: step 1/1. It participates in porphyrin-containing compound metabolism; siroheme biosynthesis; sirohydrochlorin from precorrin-2: step 1/1. Functionally, multifunctional enzyme that catalyzes the SAM-dependent methylations of uroporphyrinogen III at position C-2 and C-7 to form precorrin-2 via precorrin-1. Then it catalyzes the NAD-dependent ring dehydrogenation of precorrin-2 to yield sirohydrochlorin. Finally, it catalyzes the ferrochelation of sirohydrochlorin to yield siroheme. This chain is Siroheme synthase 2, found in Yersinia pseudotuberculosis serotype O:1b (strain IP 31758).